The sequence spans 152 residues: Deoxyuridine 5'-triphosphate nucleotidohydrolase (152 aa).

Substrate contacts are provided by residues 71–73, Asn84, 88–90, and Met98; these read RSG and LID.

Belongs to the dUTPase family. It depends on Mg(2+) as a cofactor.

It carries out the reaction dUTP + H2O = dUMP + diphosphate + H(+). Its pathway is pyrimidine metabolism; dUMP biosynthesis; dUMP from dCTP (dUTP route): step 2/2. This enzyme is involved in nucleotide metabolism: it produces dUMP, the immediate precursor of thymidine nucleotides and it decreases the intracellular concentration of dUTP so that uracil cannot be incorporated into DNA. The chain is Deoxyuridine 5'-triphosphate nucleotidohydrolase from Klebsiella pneumoniae subsp. pneumoniae (strain ATCC 700721 / MGH 78578).